The chain runs to 326 residues: Tagatose 1,6-diphosphate aldolase (326 aa).

This sequence belongs to the aldolase LacD family.

It catalyses the reaction D-tagatofuranose 1,6-bisphosphate = D-glyceraldehyde 3-phosphate + dihydroxyacetone phosphate. Its pathway is carbohydrate metabolism; D-tagatose 6-phosphate degradation; D-glyceraldehyde 3-phosphate and glycerone phosphate from D-tagatose 6-phosphate: step 2/2. The chain is Tagatose 1,6-diphosphate aldolase from Staphylococcus aureus (strain MSSA476).